The primary structure comprises 758 residues: UPF0313 protein CV_1738 (758 aa).

In terms of domain architecture, Radical SAM core spans 377-642 (AWEMIKYSVN…VDVVRDGYRR (266 aa)). 3 residues coordinate [4Fe-4S] cluster: cysteine 391, cysteine 395, and cysteine 398. Residues 698–758 (GAPMNRGKSP…KPGGKTSRSR (61 aa)) are disordered. Gly residues predominate over residues 727–737 (RGQGGQGGRPG).

The protein belongs to the UPF0313 family. [4Fe-4S] cluster serves as cofactor.

The protein is UPF0313 protein CV_1738 of Chromobacterium violaceum (strain ATCC 12472 / DSM 30191 / JCM 1249 / CCUG 213 / NBRC 12614 / NCIMB 9131 / NCTC 9757 / MK).